Here is a 950-residue protein sequence, read N- to C-terminus: 2-oxoglutarate dehydrogenase E1 component (950 aa).

The protein belongs to the alpha-ketoglutarate dehydrogenase family. Homodimer. Part of the 2-oxoglutarate dehydrogenase (OGDH) complex composed of E1 (2-oxoglutarate dehydrogenase), E2 (dihydrolipoamide succinyltransferase) and E3 (dihydrolipoamide dehydrogenase); the complex contains multiple copies of the three enzymatic components (E1, E2 and E3). Thiamine diphosphate serves as cofactor.

It carries out the reaction N(6)-[(R)-lipoyl]-L-lysyl-[protein] + 2-oxoglutarate + H(+) = N(6)-[(R)-S(8)-succinyldihydrolipoyl]-L-lysyl-[protein] + CO2. In terms of biological role, E1 component of the 2-oxoglutarate dehydrogenase (OGDH) complex which catalyzes the decarboxylation of 2-oxoglutarate, the first step in the conversion of 2-oxoglutarate to succinyl-CoA and CO(2). This is 2-oxoglutarate dehydrogenase E1 component from Geobacillus kaustophilus (strain HTA426).